The chain runs to 140 residues: Ribosome-binding factor A (140 aa).

Residues 118-133 (DEAKQQKHNGKDKTDT) are compositionally biased toward basic and acidic residues. The interval 118–140 (DEAKQQKHNGKDKTDTADSEGEE) is disordered.

It belongs to the RbfA family. In terms of assembly, monomer. Binds 30S ribosomal subunits, but not 50S ribosomal subunits or 70S ribosomes.

The protein localises to the cytoplasm. One of several proteins that assist in the late maturation steps of the functional core of the 30S ribosomal subunit. Associates with free 30S ribosomal subunits (but not with 30S subunits that are part of 70S ribosomes or polysomes). Required for efficient processing of 16S rRNA. May interact with the 5'-terminal helix region of 16S rRNA. The protein is Ribosome-binding factor A of Shewanella woodyi (strain ATCC 51908 / MS32).